We begin with the raw amino-acid sequence, 144 residues long: Ribosome-binding factor A (144 aa).

The disordered stretch occupies residues 120–144 (DKRRMAEAGREEDEAAPDDTTEDKA). Residues 129–144 (REEDEAAPDDTTEDKA) show a composition bias toward acidic residues.

The protein belongs to the RbfA family. Monomer. Binds 30S ribosomal subunits, but not 50S ribosomal subunits or 70S ribosomes.

It localises to the cytoplasm. Functionally, one of several proteins that assist in the late maturation steps of the functional core of the 30S ribosomal subunit. Associates with free 30S ribosomal subunits (but not with 30S subunits that are part of 70S ribosomes or polysomes). Required for efficient processing of 16S rRNA. May interact with the 5'-terminal helix region of 16S rRNA. This chain is Ribosome-binding factor A, found in Aeromonas salmonicida (strain A449).